We begin with the raw amino-acid sequence, 22 residues long: Motilin (22 aa).

Residues 1 to 11 (FVPFFTQSDIQ) are compositionally biased toward polar residues. Positions 1–22 (FVPFFTQSDIQKMQEKERNKGQ) are disordered. The span at 12-22 (KMQEKERNKGQ) shows a compositional bias: basic and acidic residues.

It belongs to the motilin family.

Its subcellular location is the secreted. Functionally, plays an important role in the regulation of interdigestive gastrointestinal motility and indirectly causes rhythmic contraction of duodenal and colonic smooth muscle. In Gallus gallus (Chicken), this protein is Motilin (MLN).